The sequence spans 81 residues: Acyl carrier protein (81 aa).

Residues 3-78 (QEIFDKIKNI…EAVNIIAEKT (76 aa)) enclose the Carrier domain. The residue at position 38 (serine 38) is an O-(pantetheine 4'-phosphoryl)serine.

The protein belongs to the acyl carrier protein (ACP) family. 4'-phosphopantetheine is transferred from CoA to a specific serine of apo-ACP by AcpS. This modification is essential for activity because fatty acids are bound in thioester linkage to the sulfhydryl of the prosthetic group.

It localises to the cytoplasm. It participates in lipid metabolism; fatty acid biosynthesis. Carrier of the growing fatty acid chain in fatty acid biosynthesis. The protein is Acyl carrier protein of Picosynechococcus sp. (strain ATCC 27264 / PCC 7002 / PR-6) (Agmenellum quadruplicatum).